Reading from the N-terminus, the 594-residue chain is (-)-endo-fenchol synthase, chloroplastic (594 aa).

The transit peptide at 1 to 50 directs the protein to the chloroplast; the sequence is MSSLVMHVGIVNKPAITYLPTLSRSASNLHNVSSTRLQTSCSLQLDYKPV. Asp-348, Asp-352, Asp-492, and Glu-500 together coordinate Mg(2+). Residues 348–352 carry the DDXXD motif motif; it reads DDIYD.

Belongs to the terpene synthase family. Tpsa subfamily. Mg(2+) is required as a cofactor. The cofactor is Mn(2+). As to expression, expressed at high levels in leaves.

It localises to the plastid. The protein localises to the chloroplast. It catalyses the reaction (2E)-geranyl diphosphate = alpha-pinene + diphosphate. The enzyme catalyses (2E)-geranyl diphosphate + H2O = (1S,2S,4R)-endo-fenchol + diphosphate. The catalysed reaction is (2E)-geranyl diphosphate = limonene + diphosphate. It participates in secondary metabolite biosynthesis; terpenoid biosynthesis. Its function is as follows. Monoterpene synthase involved in the biosynthesis of volatile compounds widely used in aromatherapy and folk medicine, and present in culinary herbs. Mediates the conversion of (2E)-geranyl diphosphate (GPP) into alpha fenchol, limonene and alpha-pinene and, as minor compounds, into beta-myrcene, alpha-terpinolene and alpha-phellandrene. This Lavandula pedunculata subsp. lusitanica (French lavender) protein is (-)-endo-fenchol synthase, chloroplastic.